The sequence spans 635 residues: Biosynthetic arginine decarboxylase (635 aa).

The residue at position 103 (K103) is an N6-(pyridoxal phosphate)lysine. Residue 283–293 (FDVGGGLGVDY) coordinates substrate.

Belongs to the Orn/Lys/Arg decarboxylase class-II family. SpeA subfamily. Mg(2+) is required as a cofactor. Pyridoxal 5'-phosphate serves as cofactor.

The enzyme catalyses L-arginine + H(+) = agmatine + CO2. Its pathway is amine and polyamine biosynthesis; agmatine biosynthesis; agmatine from L-arginine: step 1/1. In terms of biological role, catalyzes the biosynthesis of agmatine from arginine. The sequence is that of Biosynthetic arginine decarboxylase from Proteus mirabilis (strain HI4320).